The sequence spans 95 residues: FXYD domain-containing ion transport regulator 6 (95 aa).

The first 18 residues, 1-18 (MELVLVFLCSLLAPTVLA), serve as a signal peptide directing secretion. Over 19–35 (SAAEKEKEMDPFHYDYQ) the chain is Extracellular. Residues 36–58 (TLRIGGLVFAVVLFSVGILLILS) traverse the membrane as a helical segment. Topologically, residues 59-95 (RRCKCSFNQKPRAPGDEEAQVENLITANATEPQKAEN) are cytoplasmic.

This sequence belongs to the FXYD family. Regulatory subunit of the sodium/potassium-transporting ATPase which is composed of a catalytic alpha subunit, a non-catalytic beta subunit and an additional regulatory subunit. The regulatory subunit, a member of the FXYD protein family, modulates the enzymatic activity in a tissue- and isoform-specific way by changing affinities of the Na+/K+-ATPase toward Na(+), K(+) or ATP.

The protein resides in the cell membrane. In terms of biological role, associates with and regulates the activity of the sodium/potassium-transporting ATPase (NKA) which catalyzes the hydrolysis of ATP coupled with the exchange of Na(+) and K(+) ions across the plasma membrane. Reduces the apparent affinity for intracellular Na(+) with no change in the apparent affinity for extracellular K(+). In addition to modulating NKA kinetics, may also function as a regulator of NKA localization to the plasma membrane. This chain is FXYD domain-containing ion transport regulator 6 (FXYD6), found in Pongo abelii (Sumatran orangutan).